A 478-amino-acid polypeptide reads, in one-letter code: Phosphatidylinositol 4-kinase type 2-alpha (478 aa).

N-acetylmethionine is present on M1. Residues 1–57 form a disordered region; it reads MDETSPLVSPERAQPPEYTFPSVSGAHFPQVPGGAVRVAAAGSGPSPPCSPGHDRER. Phosphoserine is present on residues S5, S9, S43, S46, and S50. A compositionally biased stretch (low complexity) spans 31-44; the sequence is VPGGAVRVAAAGSG. Residues 123–452 form the PI3K/PI4K catalytic domain; sequence SIYPERIYQG…VQMPPVIVET (330 aa). Residues 129-135 are G-loop; that stretch reads IYQGSSG. ATP contacts are provided by residues 130–136 and K151; that span reads YQGSSGS. An important for substrate binding region spans residues 156-158; sequence EPY. An important for interaction with membranes region spans residues 164–177; the sequence is KWTKWLQKLCCPCC. 4 S-palmitoyl cysteine lipidation sites follow: C173, C174, C176, and C177. Position 260-263 (260-263) interacts with ATP; the sequence is QLFV. Positions 267–275 are important for interaction with membranes; sequence KDADYWLRR. Positions 304–312 are catalytic loop; that stretch reads RNTDRGNDN. Residues 343-363 are activation loop; it reads AIDNGLAFPLKHPDSWRAYPF. An ATP-binding site is contributed by D345. The tract at residues 358-367 is important for interaction with membranes; sequence WRAYPFYWAW. S461 carries the phosphoserine modification.

It belongs to the PI3/PI4-kinase family. Type II PI4K subfamily. In terms of assembly, associates with the BLOC-1 and the AP-3 complexes; the BLOC-1 complex is required for optimal binding of PI4K2A to the AP-3 complex. Interacts with BLOC1S5 and DTNBP1. Interacts with FOS; this interaction may enhance phosphatidylinositol phosphorylation activity. Interacts with ITCH. Interacts with ATG9A. Ubiquitinated by ITCH; this does not lead to proteasomal degradation. In terms of processing, palmitoylated. Palmitoylated by ZDHHC3 and ZDHHC7 in the CCPCC motif. Palmitoylation is cholesterol-dependent, and required for TGN localization. Detected in adult brain, especially in neurons in the cerebellum, brain cortex, dorsal root ganglion and spinal cord (at protein level).

It is found in the golgi apparatus. Its subcellular location is the trans-Golgi network membrane. It localises to the membrane raft. The protein localises to the endosome. The protein resides in the endosome membrane. It is found in the cytoplasmic vesicle. Its subcellular location is the cell projection. It localises to the dendrite. The protein localises to the presynaptic cell membrane. The protein resides in the synapse. It is found in the synaptosome. Its subcellular location is the mitochondrion. It localises to the membrane. The protein localises to the cell membrane. The protein resides in the perikaryon. It is found in the neuron projection. It catalyses the reaction a 1,2-diacyl-sn-glycero-3-phospho-(1D-myo-inositol) + ATP = a 1,2-diacyl-sn-glycero-3-phospho-(1D-myo-inositol 4-phosphate) + ADP + H(+). Membrane-bound phosphatidylinositol-4 kinase (PI4-kinase) that catalyzes the phosphorylation of phosphatidylinositol (PI) to phosphatidylinositol 4-phosphate (PI4P), a lipid that plays important roles in endocytosis, Golgi function, protein sorting and membrane trafficking and is required for prolonged survival of neurons. Besides, phosphorylation of phosphatidylinositol (PI) to phosphatidylinositol 4-phosphate (PI4P) is the first committed step in the generation of phosphatidylinositol 4,5-bisphosphate (PIP2), a precursor of the second messenger inositol 1,4,5-trisphosphate (InsP3). The sequence is that of Phosphatidylinositol 4-kinase type 2-alpha (Pi4k2a) from Rattus norvegicus (Rat).